The sequence spans 159 residues: Transcriptional repressor NrdR (159 aa).

A zinc finger spans residues 3–34; that stretch reads CPFCGSDNTSVKDSRAAEDDTAVRRRRVCESC. The 91-residue stretch at 49–139 folds into the ATP-cone domain; it reads IIVVKRDGKR…VYRDFKDPSD (91 aa).

The protein belongs to the NrdR family. The cofactor is Zn(2+).

Its function is as follows. Negatively regulates transcription of bacterial ribonucleotide reductase nrd genes and operons by binding to NrdR-boxes. In Hyphomonas neptunium (strain ATCC 15444), this protein is Transcriptional repressor NrdR.